Reading from the N-terminus, the 1242-residue chain is Receptor-type adenylate cyclase GRESAG 4.1 (1242 aa).

At 1-39 (MHWQEGGGRGCVYTHGNCRRNLTARALQALQHVEALTCH) the chain is on the cytoplasmic side. The helical transmembrane segment at 40–60 (YCVSLLHLLPLLLMWMPPVCA) threads the bilayer. Residues 61–862 (DDSAVTVNVL…THTVTDSWNN (802 aa)) lie on the Extracellular side of the membrane. N-linked (GlcNAc...) asparagine glycans are attached at residues asparagine 116, asparagine 289, asparagine 318, asparagine 338, asparagine 401, asparagine 534, asparagine 563, asparagine 603, asparagine 702, asparagine 741, and asparagine 818. The helical transmembrane segment at 863-883 (FWVCIRLVIIYCPWCVPTHLP) threads the bilayer. Residues 884-1242 (AERRNNNRAP…PFYDMHLQEY (359 aa)) lie on the Cytoplasmic side of the membrane. Residues 901 to 1056 (TLIFTDIESS…RTPNMAARTE (156 aa)) enclose the Guanylate cyclase domain. Aspartate 906 and aspartate 949 together coordinate Mg(2+).

It belongs to the adenylyl cyclase class-3 family. Mg(2+) is required as a cofactor.

Its subcellular location is the membrane. The catalysed reaction is ATP = 3',5'-cyclic AMP + diphosphate. In terms of biological role, could act as a receptor for an unknown ligand. The polypeptide is Receptor-type adenylate cyclase GRESAG 4.1 (GRESAG 4.1) (Trypanosoma brucei brucei).